The chain runs to 451 residues: Tubulin beta-1 chain (451 aa).

8 residues coordinate GTP: glutamine 11, glutamate 73, serine 142, glycine 146, threonine 147, glycine 148, asparagine 208, and asparagine 230. Residue glutamate 73 coordinates Mg(2+). Residues 430–451 (QEATADDEAEFEEEGEVEGEYA) are disordered. Over residues 433–451 (TADDEAEFEEEGEVEGEYA) the composition is skewed to acidic residues.

It belongs to the tubulin family. In terms of assembly, dimer of alpha and beta chains. A typical microtubule is a hollow water-filled tube with an outer diameter of 25 nm and an inner diameter of 15 nM. Alpha-beta heterodimers associate head-to-tail to form protofilaments running lengthwise along the microtubule wall with the beta-tubulin subunit facing the microtubule plus end conferring a structural polarity. Microtubules usually have 13 protofilaments but different protofilament numbers can be found in some organisms and specialized cells. Mg(2+) serves as cofactor.

It localises to the cytoplasm. Its subcellular location is the cytoskeleton. Tubulin is the major constituent of microtubules, a cylinder consisting of laterally associated linear protofilaments composed of alpha- and beta-tubulin heterodimers. Microtubules grow by the addition of GTP-tubulin dimers to the microtubule end, where a stabilizing cap forms. Below the cap, tubulin dimers are in GDP-bound state, owing to GTPase activity of alpha-tubulin. The chain is Tubulin beta-1 chain from Homarus americanus (American lobster).